The primary structure comprises 154 residues: Large ribosomal subunit protein uL13 (154 aa).

It belongs to the universal ribosomal protein uL13 family. Part of the 50S ribosomal subunit.

This protein is one of the early assembly proteins of the 50S ribosomal subunit, although it is not seen to bind rRNA by itself. It is important during the early stages of 50S assembly. The sequence is that of Large ribosomal subunit protein uL13 from Brucella anthropi (strain ATCC 49188 / DSM 6882 / CCUG 24695 / JCM 21032 / LMG 3331 / NBRC 15819 / NCTC 12168 / Alc 37) (Ochrobactrum anthropi).